A 239-amino-acid chain; its full sequence is tRNA (guanine-N(1)-)-methyltransferase (239 aa).

S-adenosyl-L-methionine contacts are provided by residues Gly-115 and 134–139; that span reads MGDFVL. A disordered region spans residues 210–239; that stretch reads QQQREQRTQERRPDLWNRWQQIQNPTPPAP. Basic and acidic residues predominate over residues 211–224; it reads QQREQRTQERRPDL.

The protein belongs to the RNA methyltransferase TrmD family. Homodimer.

Its subcellular location is the cytoplasm. The enzyme catalyses guanosine(37) in tRNA + S-adenosyl-L-methionine = N(1)-methylguanosine(37) in tRNA + S-adenosyl-L-homocysteine + H(+). In terms of biological role, specifically methylates guanosine-37 in various tRNAs. The protein is tRNA (guanine-N(1)-)-methyltransferase of Synechococcus sp. (strain CC9311).